The primary structure comprises 129 residues: uncharacterized protein (129 aa).

Its subcellular location is the cytoplasm. The protein localises to the cytosol. The protein resides in the nucleus. This is an uncharacterized protein from Schizosaccharomyces pombe (strain 972 / ATCC 24843) (Fission yeast).